Here is a 210-residue protein sequence, read N- to C-terminus: Cilia- and flagella-associated protein 418 (210 aa).

The required for interaction with FAM161A stretch occupies residues 1-77; that stretch reads MAKDLDELLD…LINEIFEEPN (77 aa). The tract at residues 24–59 is disordered; that stretch reads LDLGERPKGGSGGGGTHSGDRNGAQEKDTLRSTETF. Residues 41 to 59 are compositionally biased toward basic and acidic residues; sequence SGDRNGAQEKDTLRSTETF.

As to quaternary structure, interacts (via N-terminus) with FAM161A (via central region); the interaction is direct.

The protein localises to the cytoplasm. It localises to the photoreceptor inner segment. May be involved in photoreceptor outer segment disk morphogenesis. This is Cilia- and flagella-associated protein 418 from Rattus norvegicus (Rat).